The sequence spans 901 residues: Probable inorganic carbon transporter subunit DabA (901 aa).

Positions 424, 426, 606, and 621 each coordinate Zn(2+).

This sequence belongs to the inorganic carbon transporter (TC 9.A.2) DabA family. Forms a complex with DabB. Requires Zn(2+) as cofactor.

It is found in the cell membrane. Functionally, part of an energy-coupled inorganic carbon pump. The protein is Probable inorganic carbon transporter subunit DabA of Staphylococcus aureus (strain MSSA476).